The sequence spans 155 residues: Ribosomal RNA large subunit methyltransferase H 1 (155 aa).

S-adenosyl-L-methionine is bound by residues L76, G108, and 127-132 (FSKMTF).

The protein belongs to the RNA methyltransferase RlmH family. In terms of assembly, homodimer.

It is found in the cytoplasm. It carries out the reaction pseudouridine(1915) in 23S rRNA + S-adenosyl-L-methionine = N(3)-methylpseudouridine(1915) in 23S rRNA + S-adenosyl-L-homocysteine + H(+). Its function is as follows. Specifically methylates the pseudouridine at position 1915 (m3Psi1915) in 23S rRNA. In Thermoanaerobacter pseudethanolicus (strain ATCC 33223 / 39E) (Clostridium thermohydrosulfuricum), this protein is Ribosomal RNA large subunit methyltransferase H 1.